A 216-amino-acid polypeptide reads, in one-letter code: Thiamine-phosphate synthase (216 aa).

4-amino-2-methyl-5-(diphosphooxymethyl)pyrimidine-binding positions include 41–45 (QYREK) and Asn73. Positions 74 and 93 each coordinate Mg(2+). Ser111 serves as a coordination point for 4-amino-2-methyl-5-(diphosphooxymethyl)pyrimidine. 137–139 (TTT) serves as a coordination point for 2-[(2R,5Z)-2-carboxy-4-methylthiazol-5(2H)-ylidene]ethyl phosphate. Lys140 lines the 4-amino-2-methyl-5-(diphosphooxymethyl)pyrimidine pocket. 2-[(2R,5Z)-2-carboxy-4-methylthiazol-5(2H)-ylidene]ethyl phosphate is bound by residues Gly168 and 188-189 (VS).

The protein belongs to the thiamine-phosphate synthase family. It depends on Mg(2+) as a cofactor.

The catalysed reaction is 2-[(2R,5Z)-2-carboxy-4-methylthiazol-5(2H)-ylidene]ethyl phosphate + 4-amino-2-methyl-5-(diphosphooxymethyl)pyrimidine + 2 H(+) = thiamine phosphate + CO2 + diphosphate. It catalyses the reaction 2-(2-carboxy-4-methylthiazol-5-yl)ethyl phosphate + 4-amino-2-methyl-5-(diphosphooxymethyl)pyrimidine + 2 H(+) = thiamine phosphate + CO2 + diphosphate. The enzyme catalyses 4-methyl-5-(2-phosphooxyethyl)-thiazole + 4-amino-2-methyl-5-(diphosphooxymethyl)pyrimidine + H(+) = thiamine phosphate + diphosphate. Its pathway is cofactor biosynthesis; thiamine diphosphate biosynthesis; thiamine phosphate from 4-amino-2-methyl-5-diphosphomethylpyrimidine and 4-methyl-5-(2-phosphoethyl)-thiazole: step 1/1. In terms of biological role, condenses 4-methyl-5-(beta-hydroxyethyl)thiazole monophosphate (THZ-P) and 2-methyl-4-amino-5-hydroxymethyl pyrimidine pyrophosphate (HMP-PP) to form thiamine monophosphate (TMP). This chain is Thiamine-phosphate synthase, found in Chloroflexus aurantiacus (strain ATCC 29366 / DSM 635 / J-10-fl).